The following is a 358-amino-acid chain: Sesquiterpene synthase Agr3 (358 aa).

Mg(2+) contacts are provided by Asp99, Asn246, Ser250, and Glu254. The short motif at 99–103 (DNISD) is the DDXXD motif element. Positions 334 and 335 each coordinate (2E,6E)-farnesyl diphosphate.

This sequence belongs to the terpene synthase family. It depends on Mg(2+) as a cofactor.

It catalyses the reaction (2E,6E)-farnesyl diphosphate = alpha-muurolene + diphosphate. It carries out the reaction (2E,6E)-farnesyl diphosphate = gamma-muurolene + diphosphate. The enzyme catalyses (2E,6E)-farnesyl diphosphate = delta-cadinene + diphosphate. Its function is as follows. Terpene cyclase that catalyzes the cyclization of farnesyl diphosphate (FPP) to various sesquiterpenes, including alpha-muurolene, gamma-muurolene, germacrene, delta-cadinene, delta-cadinol and cubenol. This is Sesquiterpene synthase Agr3 from Cyclocybe aegerita (Black poplar mushroom).